Consider the following 43-residue polypeptide: uncharacterized protein (43 aa).

Residues 13–43 are disordered; that stretch reads QLPRLSRPRQSHLPAQTPQPRLSYPKTRRQI.

This is an uncharacterized protein from Clover yellow mosaic virus (CYMV).